The chain runs to 270 residues: Protein-ADP-ribose hydrolase (270 aa).

Positions 73 to 267 (VSVKDCQKTN…LYDTYLQKEN (195 aa)) constitute a Macro domain. 3 residues coordinate ADP-D-ribose: aspartate 92, isoleucine 93, and asparagine 106. 3 residues coordinate Zn(2+): cysteine 112, histidine 117, and cysteine 119. 8 residues coordinate ADP-D-ribose: cysteine 119, isoleucine 120, aspartate 121, serine 212, threonine 213, glycine 214, glutamate 215, and phenylalanine 216.

Belongs to the MacroD-type family. Zn-Macro subfamily. Zn(2+) is required as a cofactor.

The catalysed reaction is 4-O-(ADP-D-ribosyl)-L-aspartyl-[protein] + H2O = L-aspartyl-[protein] + ADP-D-ribose + H(+). Functionally, ADP-ribosylhydrolase that specifically reverses the SirTM-mediated mono-ADP-ribosylation at an asparatate residue of GcvH-L, by releasing ADP-ribose from the target protein. May play a role in the regulation of the response to host-induced oxidative stress. This Streptococcus pyogenes serotype M3 (strain ATCC BAA-595 / MGAS315) protein is Protein-ADP-ribose hydrolase.